A 517-amino-acid polypeptide reads, in one-letter code: Pentatricopeptide repeat-containing protein At1g13040, mitochondrial (517 aa).

A mitochondrion-targeting transit peptide spans 1–57 (MHQTLGAVRLAYRSRIANLVKSGMIDNAVQVFDEMRHSSYRVFSFDYNRFIGVLVRE). PPR repeat units follow at residues 8 to 42 (VRLA…SYRV), 43 to 77 (FSFD…GFSL), 78 to 112 (IPFT…GFIP), 113 to 147 (DIWA…GREP), 148 to 182 (DVVS…GVSP), 183 to 218 (DNKA…RVKL), 219 to 253 (STVV…GCEP), 254 to 288 (DLVT…GIQL), 289 to 320 (DAYS…MEPR), 324 to 358 (DVVS…GMVM), 359 to 393 (NVVT…GLSP), 394 to 428 (DRIF…EITP), 429 to 463 (DAIS…ECCP), and 464 to 498 (DELT…GFTL).

It belongs to the PPR family. P subfamily.

The protein localises to the mitochondrion. This is Pentatricopeptide repeat-containing protein At1g13040, mitochondrial from Arabidopsis thaliana (Mouse-ear cress).